We begin with the raw amino-acid sequence, 115 residues long: Cycloviolacin-O13 (115 aa).

The first 22 residues, 1-22 (MDAKKMFVALVLIATFALPSLA), serve as a signal peptide directing secretion. Positions 23-81 (TFEKDFITPETIQAILKKSAPLSNIMLEEDVINALLKSKTVISNPIIEEAFLKNSNGLN) are excised as a propeptide. Positions 82-111 (GIPCGESCVWIPCISAAIGCSCKSKVCYRN) form a cross-link, cyclopeptide (Gly-Asn). Cystine bridges form between Cys-85–Cys-101, Cys-89–Cys-103, and Cys-94–Cys-108. Positions 112–115 (SLDN) are excised as a propeptide.

In terms of processing, cycloviolacin-O13 is a cyclic peptide. In terms of tissue distribution, expressed in leaves, petals, petioles, roots and runners (at protein level).

Its function is as follows. Probably participates in a plant defense mechanism. Has hemolytic activity. This chain is Cycloviolacin-O13, found in Viola odorata (Sweet violet).